The primary structure comprises 528 residues: Major facilitator-type transporter psiT2 (528 aa).

Residues Met-1–Asp-20 form a disordered region. 5 helical membrane-spanning segments follow: residues Phe-87–Leu-107, Leu-125–Val-145, Val-148–Thr-168, Ala-174–Ile-194, and Phe-220–Phe-240. The span at Ser-260–Thr-270 shows a compositional bias: low complexity. Residues Ser-260 to Ser-299 form a disordered region. Helical transmembrane passes span Phe-322 to Val-342, Ala-357 to Leu-377, Phe-388 to Gln-408, Gly-424 to Phe-444, Leu-460 to Pro-479, and Asn-493 to Trp-513.

It belongs to the major facilitator superfamily. TCR/Tet family.

It localises to the membrane. Its function is as follows. Major facilitator-type transporter; part of the gene cluster that mediates the biosynthesis of psilocybin, a psychotropic tryptamine-derived natural product. This chain is Major facilitator-type transporter psiT2, found in Psilocybe cyanescens.